The primary structure comprises 304 residues: Lipoyl synthase (304 aa).

The disordered stretch occupies residues 1-21 (MAPELIQIDLEPRKPAPKPSW). [4Fe-4S] cluster-binding residues include Cys-48, Cys-53, Cys-59, Cys-74, Cys-78, Cys-81, and Ser-287. The region spanning 60 to 276 (WNHKTATFML…KEEAMKMGFR (217 aa)) is the Radical SAM core domain.

It belongs to the radical SAM superfamily. Lipoyl synthase family. [4Fe-4S] cluster serves as cofactor.

It localises to the cytoplasm. The enzyme catalyses [[Fe-S] cluster scaffold protein carrying a second [4Fe-4S](2+) cluster] + N(6)-octanoyl-L-lysyl-[protein] + 2 oxidized [2Fe-2S]-[ferredoxin] + 2 S-adenosyl-L-methionine + 4 H(+) = [[Fe-S] cluster scaffold protein] + N(6)-[(R)-dihydrolipoyl]-L-lysyl-[protein] + 4 Fe(3+) + 2 hydrogen sulfide + 2 5'-deoxyadenosine + 2 L-methionine + 2 reduced [2Fe-2S]-[ferredoxin]. It participates in protein modification; protein lipoylation via endogenous pathway; protein N(6)-(lipoyl)lysine from octanoyl-[acyl-carrier-protein]: step 2/2. Functionally, catalyzes the radical-mediated insertion of two sulfur atoms into the C-6 and C-8 positions of the octanoyl moiety bound to the lipoyl domains of lipoate-dependent enzymes, thereby converting the octanoylated domains into lipoylated derivatives. This Koribacter versatilis (strain Ellin345) protein is Lipoyl synthase.